A 450-amino-acid chain; its full sequence is E3 ubiquitin-protein ligase XB3 (450 aa).

6 ANK repeats span residues 11–40, 46–75, 79–108, 113–142, 158–187, and 195–225; these read GDEH…SLAR, DRLS…PPDA, HKQT…NILM, HART…TTPV, HGAT…IVSA, and PGST…RLQR. The disordered stretch occupies residues 291–312; sequence ILNGTKYSLPSPSPGDDSADDD. The RING-type zinc finger occupies 323 to 372; sequence CCICFDQACTIEVQDCGHQMCAPCTLALCCHNKPNPTTLTPPSPACPFCR. Positions 385 to 450 are disordered; the sequence is SACDPDKPSS…SNLDKPEHDL (66 aa).

As to quaternary structure, interacts (via ankyrin repeats) with XA21. In terms of processing, phosphorylated by XA21.

It catalyses the reaction S-ubiquitinyl-[E2 ubiquitin-conjugating enzyme]-L-cysteine + [acceptor protein]-L-lysine = [E2 ubiquitin-conjugating enzyme]-L-cysteine + N(6)-ubiquitinyl-[acceptor protein]-L-lysine.. The protein operates within protein modification; protein ubiquitination. In terms of biological role, E3 ubiquitin-protein ligase required for full accumulation of the LRR receptor kinase XA21 and XA21-mediated disease resistance. Binding to XA21 may stabilize the receptor kinase and maintain its protein level. Autoubiquitinated in vitro. The chain is E3 ubiquitin-protein ligase XB3 (XB3) from Oryza sativa subsp. japonica (Rice).